The chain runs to 523 residues: Glycerate kinase (523 aa).

Ser60 is subject to Phosphoserine. N6-acetyllysine is present on Lys200.

Belongs to the glycerate kinase type-2 family.

It localises to the cytoplasm. It carries out the reaction (R)-glycerate + ATP = (2R)-3-phosphoglycerate + ADP + H(+). This is Glycerate kinase (Glyctk) from Rattus norvegicus (Rat).